The following is a 185-amino-acid chain: Flavodoxin (185 aa).

The Flavodoxin-like domain maps to 4–159; that stretch reads VLVIYDTRTG…ACRRLGRRLA (156 aa).

This sequence belongs to the flavodoxin family. Requires FMN as cofactor.

Low-potential electron donor to a number of redox enzymes. This Aquifex aeolicus (strain VF5) protein is Flavodoxin (fldA).